Here is a 217-residue protein sequence, read N- to C-terminus: Large ribosomal subunit protein uL3 (217 aa).

The tract at residues 129-162 (SRGPMSHGSKNHRAPGSTGAGTTPGRIYPGKRMA) is disordered. Over residues 142-153 (APGSTGAGTTPG) the composition is skewed to low complexity.

It belongs to the universal ribosomal protein uL3 family. Part of the 50S ribosomal subunit. Forms a cluster with proteins L14 and L19.

Functionally, one of the primary rRNA binding proteins, it binds directly near the 3'-end of the 23S rRNA, where it nucleates assembly of the 50S subunit. This is Large ribosomal subunit protein uL3 from Prochlorococcus marinus (strain MIT 9215).